Reading from the N-terminus, the 476-residue chain is Aspartyl/glutamyl-tRNA(Asn/Gln) amidotransferase subunit B (476 aa).

This sequence belongs to the GatB/GatE family. GatB subfamily. In terms of assembly, heterotrimer of A, B and C subunits.

It catalyses the reaction L-glutamyl-tRNA(Gln) + L-glutamine + ATP + H2O = L-glutaminyl-tRNA(Gln) + L-glutamate + ADP + phosphate + H(+). It carries out the reaction L-aspartyl-tRNA(Asn) + L-glutamine + ATP + H2O = L-asparaginyl-tRNA(Asn) + L-glutamate + ADP + phosphate + 2 H(+). Allows the formation of correctly charged Asn-tRNA(Asn) or Gln-tRNA(Gln) through the transamidation of misacylated Asp-tRNA(Asn) or Glu-tRNA(Gln) in organisms which lack either or both of asparaginyl-tRNA or glutaminyl-tRNA synthetases. The reaction takes place in the presence of glutamine and ATP through an activated phospho-Asp-tRNA(Asn) or phospho-Glu-tRNA(Gln). This Neisseria meningitidis serogroup C / serotype 2a (strain ATCC 700532 / DSM 15464 / FAM18) protein is Aspartyl/glutamyl-tRNA(Asn/Gln) amidotransferase subunit B.